Consider the following 168-residue polypeptide: Large ribosomal subunit protein uL10 (168 aa).

This sequence belongs to the universal ribosomal protein uL10 family. As to quaternary structure, part of the ribosomal stalk of the 50S ribosomal subunit. The N-terminus interacts with L11 and the large rRNA to form the base of the stalk. The C-terminus forms an elongated spine to which L12 dimers bind in a sequential fashion forming a multimeric L10(L12)X complex.

Functionally, forms part of the ribosomal stalk, playing a central role in the interaction of the ribosome with GTP-bound translation factors. This Clostridioides difficile (strain 630) (Peptoclostridium difficile) protein is Large ribosomal subunit protein uL10.